Here is a 354-residue protein sequence, read N- to C-terminus: Biotin synthase (354 aa).

The region spanning 41–265 (NEVQISRLLS…LMPHSRVRLS (225 aa)) is the Radical SAM core domain. The [4Fe-4S] cluster site is built by Cys56, Cys60, and Cys63. Residues Cys100, Cys131, Cys191, and Arg263 each contribute to the [2Fe-2S] cluster site.

This sequence belongs to the radical SAM superfamily. Biotin synthase family. Homodimer. The cofactor is [4Fe-4S] cluster. [2Fe-2S] cluster is required as a cofactor.

It carries out the reaction (4R,5S)-dethiobiotin + (sulfur carrier)-SH + 2 reduced [2Fe-2S]-[ferredoxin] + 2 S-adenosyl-L-methionine = (sulfur carrier)-H + biotin + 2 5'-deoxyadenosine + 2 L-methionine + 2 oxidized [2Fe-2S]-[ferredoxin]. The protein operates within cofactor biosynthesis; biotin biosynthesis; biotin from 7,8-diaminononanoate: step 2/2. Its function is as follows. Catalyzes the conversion of dethiobiotin (DTB) to biotin by the insertion of a sulfur atom into dethiobiotin via a radical-based mechanism. The chain is Biotin synthase from Shewanella woodyi (strain ATCC 51908 / MS32).